The primary structure comprises 418 residues: Putative competence-damage inducible protein (418 aa).

This sequence belongs to the CinA family.

In Clostridioides difficile (strain 630) (Peptoclostridium difficile), this protein is Putative competence-damage inducible protein.